A 198-amino-acid polypeptide reads, in one-letter code: Ribosome maturation factor RimM (198 aa).

The PRC barrel domain occupies 92 to 168; sequence DDEYYHADLI…IELPAEIEGE (77 aa). Positions 163–172 are enriched in acidic residues; it reads AEIEGEDQDS. Positions 163-198 are disordered; the sequence is AEIEGEDQDSSDNAGSPEGDAAASNSARHPRESGDP.

It belongs to the RimM family. Binds ribosomal protein uS19.

The protein resides in the cytoplasm. Its function is as follows. An accessory protein needed during the final step in the assembly of 30S ribosomal subunit, possibly for assembly of the head region. Essential for efficient processing of 16S rRNA. May be needed both before and after RbfA during the maturation of 16S rRNA. It has affinity for free ribosomal 30S subunits but not for 70S ribosomes. The chain is Ribosome maturation factor RimM from Bradyrhizobium sp. (strain BTAi1 / ATCC BAA-1182).